Consider the following 159-residue polypeptide: Protein Smg homolog (159 aa).

Belongs to the Smg family.

The sequence is that of Protein Smg homolog from Dichelobacter nodosus (strain VCS1703A).